We begin with the raw amino-acid sequence, 200 residues long: H-2 class I histocompatibility antigen, Q9 alpha chain (200 aa).

An N-terminal signal peptide occupies residues 1 to 21 (MALTMLLLLVAAALTLIETRA). The interval 22–111 (GQHSLQYFHT…AQSYYNQSKG (90 aa)) is alpha-1. Topologically, residues 22–200 (GQHSLQYFHT…RYLELGKETL (179 aa)) are extracellular. Asparagine 107 carries N-linked (GlcNAc...) asparagine glycosylation. The tract at residues 112–200 (GSHTLQWMYG…RYLELGKETL (89 aa)) is alpha-2. A disulfide bridge links cysteine 122 with cysteine 185.

The protein belongs to the MHC class I family. Heterodimer of an alpha chain and a beta chain (beta-2-microglobulin).

It is found in the membrane. Functionally, involved in the presentation of foreign antigens to the immune system. The sequence is that of H-2 class I histocompatibility antigen, Q9 alpha chain (H2-Q9) from Mus musculus (Mouse).